We begin with the raw amino-acid sequence, 213 residues long: CDP-diacylglycerol--inositol 3-phosphatidyltransferase (213 aa).

At 1 to 5 (MPEEN) the chain is on the cytoplasmic side. The chain crosses the membrane as a helical span at residues 6–26 (IFLFVPNLIGYARIVFAIISF). Tyrosine 27 is a topological domain (lumenal). The chain crosses the membrane as a helical span at residues 28–48 (FMPCCPFTASSFYLLSGLLDA). Residues aspartate 47 and aspartate 50 each coordinate Mg(2+). Residues 49–73 (FDGHAARALNQGTRFGAMLDMLTDR) are Cytoplasmic-facing. A CDP-1,2-diacyl-sn-glycerol contacts are provided by glycine 51, arginine 55, and threonine 61. Residues aspartate 68 and aspartate 72 each coordinate Mg(2+). The Proton acceptor role is filled by aspartate 72. The chain crosses the membrane as a helical span at residues 74 to 94 (CATMCLLVNLALLYPRATLLF). Glutamine 95 is a topological domain (lumenal). A helical transmembrane segment spans residues 96 to 116 (LSMSLDVASHWLHLHSSVVRG). Over 117–139 (SESHKMIDLSGNPVLRIYYTSRP) the chain is Cytoplasmic. A helical membrane pass occupies residues 140–160 (ALFTLCAGNELFYCLLYLFNF). The Lumenal portion of the chain corresponds to 161 to 174 (SEGPLVGSVGLFRM). The helical transmembrane segment at 175–195 (GLWITAPIALLKSIISVIHLV) threads the bilayer. Topologically, residues 196–213 (TAARNMAALDAADRAKKK) are cytoplasmic.

Belongs to the CDP-alcohol phosphatidyltransferase class-I family. Mn(2+) is required as a cofactor. The cofactor is Mg(2+). In terms of tissue distribution, detected in liver (at protein level). Widely expressed. Highly expressed in the brain and kidney; lower levels in heart, spleen, lung, liver, skeletal muscle and testis.

The protein localises to the endoplasmic reticulum membrane. It localises to the cell membrane. The catalysed reaction is a CDP-1,2-diacyl-sn-glycerol + myo-inositol = a 1,2-diacyl-sn-glycero-3-phospho-(1D-myo-inositol) + CMP + H(+). Its function is as follows. Catalyzes the biosynthesis of phosphatidylinositol (PtdIns) as well as PtdIns:inositol exchange reaction. May thus act to reduce an excessive cellular PtdIns content. The exchange activity is due to the reverse reaction of PtdIns synthase and is dependent on CMP, which is tightly bound to the enzyme. This chain is CDP-diacylglycerol--inositol 3-phosphatidyltransferase, found in Rattus norvegicus (Rat).